Here is a 145-residue protein sequence, read N- to C-terminus: Small ribosomal subunit protein bS6 (145 aa).

The span at E113 to E132 shows a compositional bias: basic and acidic residues. Residues E113 to E145 are disordered. The span at E133–E145 shows a compositional bias: acidic residues.

Belongs to the bacterial ribosomal protein bS6 family.

Its function is as follows. Binds together with bS18 to 16S ribosomal RNA. This is Small ribosomal subunit protein bS6 from Campylobacter hominis (strain ATCC BAA-381 / DSM 21671 / CCUG 45161 / LMG 19568 / NCTC 13146 / CH001A).